The sequence spans 516 residues: Glutamyl-tRNA(Gln) amidotransferase subunit B, mitochondrial (516 aa).

This sequence belongs to the GatB/GatE family. GatB subfamily. In terms of assembly, subunit of the heterotrimeric GatCAB amidotransferase (AdT) complex, composed of A, B and C subunits.

Its subcellular location is the mitochondrion. The catalysed reaction is L-glutamyl-tRNA(Gln) + L-glutamine + ATP + H2O = L-glutaminyl-tRNA(Gln) + L-glutamate + ADP + phosphate + H(+). Functionally, allows the formation of correctly charged Gln-tRNA(Gln) through the transamidation of misacylated Glu-tRNA(Gln) in the mitochondria. The reaction takes place in the presence of glutamine and ATP through an activated gamma-phospho-Glu-tRNA(Gln). The chain is Glutamyl-tRNA(Gln) amidotransferase subunit B, mitochondrial from Drosophila melanogaster (Fruit fly).